The sequence spans 677 residues: MSSSTTPDLLYPSADKVAEPSDNIHGDELRLRERIKDNPTNILSYFQLIQYLETQESYAKVREVYEQFHNTFPFYSPAWTLQLKGELARDEFETVEKILAQCLSGKLENNDLSLWSTYLDYIRRKNNLITGGQEARAVIVKAFQLVMQKCAIFEPKSSSFWNEYLNFLEQWKPFNKWEEQQRIDMLREFYKKMLCVPFDNLEKMWNRYTQWEQEINSLTARKFIGELSAEYMKARSLYQEWLNVTNGLKRASPINLRTANKKNIPQPGTSDSNIQQLQIWLNWIKWERENKLMLSEDMLSQRISYVYKQGIQYMIFSAEMWYDYSMYISENSDRQNILYTALLANPDSPSLTFKLSECYELDNDSESVSNCFDKCTQTLLSQYKKIASDVNSGEDNNTEYEQELLYKQREKLTFVFCVYMNTMKRISGLSAARTVFGKCRKLKRILTHDVYVENAYLEFQNQNDYKTAFKVLELGLKYFQNDGVYINKYLDFLIFLNKDSQIKTLFETSVEKVQDLTQLKEIYKKMISYESKFGNLNNVYSLEKRFFERFPQENLIEVFTSRYQIQNSNLIKKLELTYMYNEEEDSYFSSGNGDGHHGSYNMSSSDRKRLMEETGNNGNFSNKKFKRDSELPTEVLDLLSVIPKRQYFNTNLLDAQKLVNFLNDQVEIPTVESTKSG.

HAT repeat units follow at residues 56–88 (ESYAKVREVYEQFHNTFPFYSPAWTLQLKGELA), 90–124 (DEFETVEKILAQCLSGKLENNDLSLWSTYLDYIRR), 138–170 (VIVKAFQLVMQKCAIFEPKSSSFWNEYLNFLEQ), 181–214 (QRIDMLREFYKKMLCVPFDNLEKMWNRYTQWEQE), 257–289 (RTANKKNIPQPGTSDSNIQQLQIWLNWIKWERE), and 298–330 (MLSQRISYVYKQGIQYMIFSAEMWYDYSMYISE).

Component of the CFIA complex, which is composed of RNA14, RNA15, PCF11 and CLP1. Interacts with FIP1, PFS2, YSH1 and probably also with RNA15. Probably interacts with the phosphorylated CTD domain of RPB1/RNA polymerase II.

It is found in the nucleus. It localises to the cytoplasm. Its function is as follows. Component of the cleavage factor IA (CFIA) complex, which is involved in the endonucleolytic cleavage during polyadenylation-dependent pre-mRNA 3'-end formation and cooperates with the cleavage factor NAB4/CFIB and the cleavage and polyadenylation factor (CPF) complex. In Saccharomyces cerevisiae (strain ATCC 204508 / S288c) (Baker's yeast), this protein is mRNA 3'-end-processing protein RNA14 (RNA14).